A 503-amino-acid chain; its full sequence is Cytochrome P450 3A17 (503 aa).

C442 is a heme binding site.

Belongs to the cytochrome P450 family. Requires heme as cofactor.

The protein resides in the endoplasmic reticulum membrane. It is found in the microsome membrane. The catalysed reaction is an organic molecule + reduced [NADPH--hemoprotein reductase] + O2 = an alcohol + oxidized [NADPH--hemoprotein reductase] + H2O + H(+). Its function is as follows. Cytochromes P450 are a group of heme-thiolate monooxygenases. In liver microsomes, this enzyme is involved in an NADPH-dependent electron transport pathway. It oxidizes a variety of structurally unrelated compounds, including steroids, fatty acids, and xenobiotics. In Cavia porcellus (Guinea pig), this protein is Cytochrome P450 3A17 (CYP3A17).